The following is a 69-amino-acid chain: UPF0270 protein VCM66_2532 (69 aa).

It belongs to the UPF0270 family.

This Vibrio cholerae serotype O1 (strain M66-2) protein is UPF0270 protein VCM66_2532.